Consider the following 182-residue polypeptide: Isopentenyl-diphosphate Delta-isomerase (182 aa).

Residues His-25 and His-32 each coordinate Mn(2+). The 135-residue stretch at 30–164 (RLHLAFSSWL…PWAFSPWMVM (135 aa)) folds into the Nudix hydrolase domain. The active site involves Cys-67. Cys-67 contributes to the Mg(2+) binding site. Residue His-69 participates in Mn(2+) binding. Residue Glu-87 coordinates Mg(2+). Residues Glu-114 and Glu-116 each contribute to the Mn(2+) site. The active site involves Glu-116.

This sequence belongs to the IPP isomerase type 1 family. Homodimer. It depends on Mg(2+) as a cofactor. Mn(2+) serves as cofactor.

Its subcellular location is the cytoplasm. The enzyme catalyses isopentenyl diphosphate = dimethylallyl diphosphate. It participates in isoprenoid biosynthesis; dimethylallyl diphosphate biosynthesis; dimethylallyl diphosphate from isopentenyl diphosphate: step 1/1. Its function is as follows. Catalyzes the 1,3-allylic rearrangement of the homoallylic substrate isopentenyl (IPP) to its highly electrophilic allylic isomer, dimethylallyl diphosphate (DMAPP). In Shigella dysenteriae serotype 1 (strain Sd197), this protein is Isopentenyl-diphosphate Delta-isomerase.